Here is a 519-residue protein sequence, read N- to C-terminus: Probable cytochrome P450 513D1 (519 aa).

The chain crosses the membrane as a helical span at residues 1–21 (MGISSIIIILFIIVLLKKLIK). Residue cysteine 464 participates in heme binding.

It belongs to the cytochrome P450 family. Heme is required as a cofactor.

The protein localises to the membrane. In Dictyostelium discoideum (Social amoeba), this protein is Probable cytochrome P450 513D1 (cyp513D1).